Consider the following 198-residue polypeptide: Recombination protein RecR (198 aa).

The C4-type zinc finger occupies 57–72 (CSICGNLTDQDPCAIC). Residues 80 to 175 (STILIVEDSR…KVTRLARGLA (96 aa)) enclose the Toprim domain.

It belongs to the RecR family.

Functionally, may play a role in DNA repair. It seems to be involved in an RecBC-independent recombinational process of DNA repair. It may act with RecF and RecO. The chain is Recombination protein RecR from Streptococcus suis (strain 05ZYH33).